We begin with the raw amino-acid sequence, 348 residues long: GTPase Obg (348 aa).

The region spanning 1-159 is the Obg domain; that stretch reads MKFLDLAKVY…RTIWLRLKLI (159 aa). An OBG-type G domain is found at 160–327; sequence ADAGLLGLPN…VLRAVRAEID (168 aa). GTP-binding positions include 166–173, 191–195, 212–215, 279–282, and 308–310; these read GLPNAGKS, FTTLH, DIPG, NKID, and SSV. Mg(2+) contacts are provided by S173 and T193.

Belongs to the TRAFAC class OBG-HflX-like GTPase superfamily. OBG GTPase family. In terms of assembly, monomer. Mg(2+) is required as a cofactor.

It localises to the cytoplasm. In terms of biological role, an essential GTPase which binds GTP, GDP and possibly (p)ppGpp with moderate affinity, with high nucleotide exchange rates and a fairly low GTP hydrolysis rate. Plays a role in control of the cell cycle, stress response, ribosome biogenesis and in those bacteria that undergo differentiation, in morphogenesis control. This chain is GTPase Obg, found in Ruegeria sp. (strain TM1040) (Silicibacter sp.).